A 396-amino-acid polypeptide reads, in one-letter code: Elongation factor Tu (396 aa).

A tr-type G domain is found at 10–205 (KPHVNIGTIG…ACDESIPDPV (196 aa)). The tract at residues 19–26 (GHVDHGKT) is G1. 19-26 (GHVDHGKT) is a binding site for GTP. T26 contributes to the Mg(2+) binding site. The tract at residues 62–66 (GITIN) is G2. Residues 83 to 86 (DAPG) form a G3 region. GTP contacts are provided by residues 83–87 (DAPGH) and 138–141 (NKCD). Positions 138–141 (NKCD) are G4. The segment at 175 to 177 (SAL) is G5.

The protein belongs to the TRAFAC class translation factor GTPase superfamily. Classic translation factor GTPase family. EF-Tu/EF-1A subfamily. In terms of assembly, monomer.

It is found in the cytoplasm. The catalysed reaction is GTP + H2O = GDP + phosphate + H(+). Functionally, GTP hydrolase that promotes the GTP-dependent binding of aminoacyl-tRNA to the A-site of ribosomes during protein biosynthesis. The sequence is that of Elongation factor Tu from Corynebacterium kroppenstedtii (strain DSM 44385 / JCM 11950 / CIP 105744 / CCUG 35717).